We begin with the raw amino-acid sequence, 62 residues long: MIQISDLLLIANVSPEVAGSSGFNMIASFFAAALLIVIPAATFLIFVSQNDSLDRTSATRRR.

Residues 26 to 46 form a helical membrane-spanning segment; sequence IASFFAAALLIVIPAATFLIF.

Belongs to the PsbX family. Type 2 subfamily. As to quaternary structure, PSII consists of a core antenna complex that captures photons, and an electron transfer chain that converts photonic excitation into a charge separation. PSII forms dimeric complexes.

The protein resides in the cellular thylakoid membrane. In terms of biological role, involved in the binding and/or turnover of quinones at the Q(B) site of Photosystem II. The sequence is that of Photosystem II reaction center X protein from Prochlorococcus marinus (strain MIT 9515).